The sequence spans 886 residues: MTANLLNLNVDTLFEQHSVSEIDEVHKKIQSVVENKREELRTHVGERYRDLLQAADTIAAMQTSAGTLMEQVRHVQANCRSLNEQQLLGFQSTANASAKDAALKERNAGKKLQTYYGTMAQIKLLTALPELIWTHLDNDRFYAATELFIFSRHISTGLQLDGQSALMQKLPVARKQWEILRPFHVTIKQAILTALEREELLQEMTVDCLQSLLLLDKSDLSTVLKSFLNLRSSAFLNCLQSGPSEPRRVKDRILASLNVLNSTVELLDKCLLGYSLLFSRLEECASSTCPPSINRMESSERQLVHLLPEIIAGFKPQFDVPQLTPEQLGSSLQQWLDKMNALAAAHLQQVFALVTNMQTIQDIKSAARTNGRPDFVRLEQQLHLKRSQLDFYARKYVPLINARVREIIRSSWASAMKLTYEQVLLLIEAGQSQPPLQIWREQSDDLPLSLAAALSDQPKRLANRTKGYDGATIELCKRFDSHLADIVQELNVMLQEQTTRAEDKVSLIEFLRETAEEQLTEYLSNLKGLELRERPALLLALRNSLALVELCPNLKLCFCQPSSWRQWTDNSAGLGIEHWQRICGLIEKEMLSFWLVIVDDVLAGHNCEEKLPKVINHEVVLSDFALWQTLTLEQRDEDQEQSVQSTIRIPSQPRLSLQTYLHQLIQALNSVVPQTLPPKVLQAFIQRLIGKLLCHYEGLAHAECTKASQNIALQLYFDLKFLERVFAISREERTLYDQIHAQQNQLRDYIDPFDFELFAEHITAHVSRAASRLQGELGVLTPSAAAPSQGAAAASSLAHEADPNVLCLSSSGSTSLWFPLLPIVMPQAAGRVTSAERKSPIQEPVEKTATTTPTRKSGGNGARKGDSSKSKSSAASFFGMSQEWFR.

The span at 834-846 (SAERKSPIQEPVE) shows a compositional bias: basic and acidic residues. Positions 834 to 886 (SAERKSPIQEPVEKTATTTPTRKSGGNGARKGDSSKSKSSAASFFGMSQEWFR) are disordered. A Phosphoserine modification is found at Ser839. Polar residues predominate over residues 848-857 (TATTTPTRKS).

The protein belongs to the COG1 family. In terms of assembly, component of the conserved oligomeric Golgi complex which is composed of eight different subunits and is required for normal Golgi morphology and localization.

It localises to the golgi apparatus membrane. In terms of biological role, required for normal Golgi function. In Drosophila melanogaster (Fruit fly), this protein is Conserved oligomeric Golgi complex subunit 1.